We begin with the raw amino-acid sequence, 56 residues long: Large ribosomal subunit protein bL32 (56 aa).

The interval 1–40 (MAVQQNKKSRSKRGMRRSHDSLGTAQLSVDATSGELHRRH) is disordered. Residues 7 to 16 (KKSRSKRGMR) are compositionally biased toward basic residues. Residues 21 to 31 (SLGTAQLSVDA) show a composition bias toward polar residues.

Belongs to the bacterial ribosomal protein bL32 family.

The sequence is that of Large ribosomal subunit protein bL32 from Shewanella halifaxensis (strain HAW-EB4).